The sequence spans 34 residues: Photosystem II reaction center protein M (34 aa).

Residues 5–25 (ILGLTATALFIIIPTSFLLIL) traverse the membrane as a helical segment.

It belongs to the PsbM family. In terms of assembly, PSII is composed of 1 copy each of membrane proteins PsbA, PsbB, PsbC, PsbD, PsbE, PsbF, PsbH, PsbI, PsbJ, PsbK, PsbL, PsbM, PsbT, PsbX, PsbY, PsbZ, Psb30/Ycf12, at least 3 peripheral proteins of the oxygen-evolving complex and a large number of cofactors. It forms dimeric complexes.

Its subcellular location is the plastid. The protein localises to the chloroplast thylakoid membrane. In terms of biological role, one of the components of the core complex of photosystem II (PSII). PSII is a light-driven water:plastoquinone oxidoreductase that uses light energy to abstract electrons from H(2)O, generating O(2) and a proton gradient subsequently used for ATP formation. It consists of a core antenna complex that captures photons, and an electron transfer chain that converts photonic excitation into a charge separation. This subunit is found at the monomer-monomer interface. The sequence is that of Photosystem II reaction center protein M from Stigeoclonium helveticum (Green alga).